We begin with the raw amino-acid sequence, 222 residues long: Deoxyribose-phosphate aldolase (222 aa).

Residue Asp90 is the Proton donor/acceptor of the active site. Catalysis depends on Lys152, which acts as the Schiff-base intermediate with acetaldehyde. Lys181 (proton donor/acceptor) is an active-site residue.

Belongs to the DeoC/FbaB aldolase family. DeoC type 1 subfamily.

The protein localises to the cytoplasm. The catalysed reaction is 2-deoxy-D-ribose 5-phosphate = D-glyceraldehyde 3-phosphate + acetaldehyde. It participates in carbohydrate degradation; 2-deoxy-D-ribose 1-phosphate degradation; D-glyceraldehyde 3-phosphate and acetaldehyde from 2-deoxy-alpha-D-ribose 1-phosphate: step 2/2. Its function is as follows. Catalyzes a reversible aldol reaction between acetaldehyde and D-glyceraldehyde 3-phosphate to generate 2-deoxy-D-ribose 5-phosphate. This is Deoxyribose-phosphate aldolase from Pectobacterium carotovorum subsp. carotovorum (strain PC1).